A 177-amino-acid polypeptide reads, in one-letter code: MAIDLQQDYFSLFGMPRRFRIDESALEAAWHGLQGEVHPDRFAHLPDVEKRRSMQWATRVNEGFRVLRKPLSRAQYLLELAGVDAAIDTNTAMSPEFLMEQMEWREAVEEARAAGEVDELEQLHLRLRQHSREVHAGLADALDDAGDYPAAAETVRRLMFIEKLQHEIDDALEALEN.

The J domain occupies 8 to 80 (DYFSLFGMPR…LSRAQYLLEL (73 aa)).

Belongs to the HscB family. In terms of assembly, interacts with HscA and stimulates its ATPase activity.

Its function is as follows. Co-chaperone involved in the maturation of iron-sulfur cluster-containing proteins. Seems to help targeting proteins to be folded toward HscA. The polypeptide is Co-chaperone protein HscB homolog (Azoarcus sp. (strain BH72)).